The primary structure comprises 275 residues: Large ribosomal subunit protein uL2 (275 aa).

Residues 222-257 are disordered; the sequence is GTAMNAVDHPHGGGRGRSKGNNQPRSPWNQPAKGFK. Residues 240 to 250 are compositionally biased toward polar residues; it reads KGNNQPRSPWN.

It belongs to the universal ribosomal protein uL2 family. As to quaternary structure, part of the 50S ribosomal subunit. Forms a bridge to the 30S subunit in the 70S ribosome.

In terms of biological role, one of the primary rRNA binding proteins. Required for association of the 30S and 50S subunits to form the 70S ribosome, for tRNA binding and peptide bond formation. It has been suggested to have peptidyltransferase activity; this is somewhat controversial. Makes several contacts with the 16S rRNA in the 70S ribosome. The chain is Large ribosomal subunit protein uL2 from Endomicrobium trichonymphae.